A 415-amino-acid chain; its full sequence is Phosphoribosylamine--glycine ligase (415 aa).

An ATP-grasp domain is found at 108–311 (KKIMKKYNIP…LMQHIIDLDE (204 aa)). 134–191 (IENCELPVVVKKDGLAAGKGVIIADTIEAARSAIEIMYGDEEEGTVVFETFLEGEEFS) lines the ATP pocket. Mg(2+) contacts are provided by glutamate 281 and asparagine 283.

This sequence belongs to the GARS family. Requires Mg(2+) as cofactor. The cofactor is Mn(2+).

The enzyme catalyses 5-phospho-beta-D-ribosylamine + glycine + ATP = N(1)-(5-phospho-beta-D-ribosyl)glycinamide + ADP + phosphate + H(+). It functions in the pathway purine metabolism; IMP biosynthesis via de novo pathway; N(1)-(5-phospho-D-ribosyl)glycinamide from 5-phospho-alpha-D-ribose 1-diphosphate: step 2/2. The sequence is that of Phosphoribosylamine--glycine ligase from Staphylococcus aureus (strain Mu50 / ATCC 700699).